The chain runs to 233 residues: MSAVRENGVIVAIDGPSGAGKSSLTKLLAKRLGYIHIDTGAMFRAVALSAQRAGIKSDDDAGLAELCRGLEIAFARDGETCRVLANGEDVSTKIRTEEIGLLTSTISARKPVRQALLEMQRKMGAKGGVILEGRDIGTVVFPDAEVKFFLSASAEERGRRRYLELAARGESATLEETIAKVIQRDRQDEGREHAPLKQAQDAVPIDSTSLTIEQVLELMESTVKERLAQGDKG.

15–23 serves as a coordination point for ATP; sequence GPSGAGKSS.

The protein belongs to the cytidylate kinase family. Type 1 subfamily.

It is found in the cytoplasm. It carries out the reaction CMP + ATP = CDP + ADP. It catalyses the reaction dCMP + ATP = dCDP + ADP. This Citrifermentans bemidjiense (strain ATCC BAA-1014 / DSM 16622 / JCM 12645 / Bem) (Geobacter bemidjiensis) protein is Cytidylate kinase.